The following is a 55-amino-acid chain: Large ribosomal subunit protein bL32 (55 aa).

The protein belongs to the bacterial ribosomal protein bL32 family.

This Aeromonas hydrophila subsp. hydrophila (strain ATCC 7966 / DSM 30187 / BCRC 13018 / CCUG 14551 / JCM 1027 / KCTC 2358 / NCIMB 9240 / NCTC 8049) protein is Large ribosomal subunit protein bL32.